We begin with the raw amino-acid sequence, 316 residues long: C-type lectin domain family 10 member A (316 aa).

The Cytoplasmic portion of the chain corresponds to 1–39 (MTRTYENFQYLENKVKVQGFKNGPLPLQSLLQRLCSGPC). Residues 5–8 (YENF) carry the Endocytosis signal motif. Residues 40 to 60 (HLLLSLGLGLLLLVIICVVGF) traverse the membrane as a helical; Signal-anchor for type II membrane protein segment. Residues 61–316 (QNSKFQRDLV…GLGQTSQESH (256 aa)) lie on the Extracellular side of the membrane. N-linked (GlcNAc...) asparagine glycosylation is found at Asn-78 and Asn-173. Positions 85–176 (AEIQALTSQG…VATLNNNAST (92 aa)) form a coiled coil. Disulfide bonds link Cys-181–Cys-192, Cys-209–Cys-304, and Cys-282–Cys-296. Positions 188-305 (HQDSCYWFSH…CQRPYHWVCE (118 aa)) constitute a C-type lectin domain. Ca(2+)-binding residues include Val-218, Asn-220, Glu-224, and Asp-243. Residues Gln-267 and Asp-269 each contribute to the a glycoprotein site. Ca(2+)-binding residues include Asp-269, Asp-270, Glu-280, and Asp-281. Glu-280 serves as a coordination point for a glycoprotein. Residues His-286 and Asn-292 each coordinate a glycoprotein. Residues Asn-292, Asp-293, and Glu-305 each coordinate Ca(2+).

As to quaternary structure, interacts with A-, B- and C-domain containing PTPRC/CD45 isoforms: isoform 1/CD45ABC, isoform 3/CD45AB, isoform 5/CD45BC and isoform 7/CD45B. Does not interact with PTPRC/CD45 isoform 2/CD45RO, a memory T cell marker. In terms of tissue distribution, expressed in myeloid antigen presenting cells in lymph nodes and skin (at protein level). Expressed in dermal dendritic cells (at protein level).

It localises to the cell membrane. The protein resides in the early endosome membrane. The protein localises to the lysosome membrane. Functionally, C-type lectin receptor involved in recognition of N-acetylgalactosamine (GalNAc)-terminated glycans by myeloid antigen presenting cells (APCs). Binds in a Ca(2+)-dependent manner to alpha- and beta-linked GalNAc residues on glycoprotein and glycolipid antigens, including alphaGalNAc- and Galbeta1-&gt;3GalNAc-O-Ser/Thr also known as Tn and T antigens, LacdiNAc epitope GalNAcbeta1-&gt;4GlcNAc and its derivative GalNAcbeta1-&gt;4-(Fucalpha1-&gt;3)GlcNAc, O-linked core 5 and 6 glycans, and GM2 and GD2 gangliosides. Acts as a signaling receptor at the interface of APC-T cell interactions. On immature dendritic cells, recognizes Tn antigen-carrying PTPRC/CD45 receptor on effector T cells and downregulates PTRPN/CD45 phosphatase activity with an impact on T cell activation threshold, cytokine production and proliferation. Modulates dendritic cell maturation toward a tolerogenic phenotype leading to generation of regulatory CD4-positive T cell subset with immune suppressive functions. Acts as an endocytic pattern recognition receptor involved in antitumor immunity. During tumorigenesis, recognizes Tn antigens and its sialylated forms Neu5Ac-Tn and Neu5Gc-Tn expressed on tumor cell mucins. On immature dendritic cells, can internalize Tn-terminated immunogens and target them to endolysosomal compartment for MHC class I and II antigen presentation to CD8-positive and CD4-positive T cells, respectively. The chain is C-type lectin domain family 10 member A from Homo sapiens (Human).